The primary structure comprises 251 residues: Triosephosphate isomerase (251 aa).

9–11 (NWK) lines the substrate pocket. Residue His-95 is the Electrophile of the active site. Residue Glu-167 is the Proton acceptor of the active site. Substrate-binding positions include Gly-173, Ser-212, and 233–234 (GG).

Belongs to the triosephosphate isomerase family. In terms of assembly, homodimer.

It is found in the cytoplasm. It carries out the reaction D-glyceraldehyde 3-phosphate = dihydroxyacetone phosphate. The protein operates within carbohydrate biosynthesis; gluconeogenesis. It participates in carbohydrate degradation; glycolysis; D-glyceraldehyde 3-phosphate from glycerone phosphate: step 1/1. Involved in the gluconeogenesis. Catalyzes stereospecifically the conversion of dihydroxyacetone phosphate (DHAP) to D-glyceraldehyde-3-phosphate (G3P). The protein is Triosephosphate isomerase of Pseudomonas syringae pv. tomato (strain ATCC BAA-871 / DC3000).